The primary structure comprises 440 residues: Protein dumpy-20 (440 aa).

The interval 96–119 is disordered; that stretch reads ILSDPSLHGSNSSSSTSDVGSSVD. The span at 98–119 shows a compositional bias: low complexity; sequence SDPSLHGSNSSSSTSDVGSSVD. BED-type zinc fingers lie at residues 137-186 and 350-399; these read PTEN…YQKV and KTEH…YNDV. Residues cysteine 156, cysteine 159, histidine 174, histidine 179, cysteine 369, cysteine 372, histidine 387, and histidine 392 each contribute to the Zn(2+) site.

In terms of biological role, may be directly or indirectly involved in cuticle function. The sequence is that of Protein dumpy-20 (dpy-20) from Caenorhabditis elegans.